We begin with the raw amino-acid sequence, 136 residues long: Transcription antitermination protein NusB (136 aa).

The protein belongs to the NusB family.

Its function is as follows. Involved in transcription antitermination. Required for transcription of ribosomal RNA (rRNA) genes. Binds specifically to the boxA antiterminator sequence of the ribosomal RNA (rrn) operons. This Paenarthrobacter aurescens (strain TC1) protein is Transcription antitermination protein NusB.